An 88-amino-acid chain; its full sequence is Small ribosomal subunit protein bS20 (88 aa).

The segment at 1–25 (MANSAQARKRVRQNNTRRQHAASQR) is disordered. A compositionally biased stretch (basic residues) spans 7-20 (ARKRVRQNNTRRQH).

The protein belongs to the bacterial ribosomal protein bS20 family.

Its function is as follows. Binds directly to 16S ribosomal RNA. In Psychrobacter sp. (strain PRwf-1), this protein is Small ribosomal subunit protein bS20.